Reading from the N-terminus, the 438-residue chain is UDP-N-acetylmuramate--L-alanine ligase (438 aa).

ATP is bound at residue 108–114 (GAHGKTS).

This sequence belongs to the MurCDEF family.

It localises to the cytoplasm. It catalyses the reaction UDP-N-acetyl-alpha-D-muramate + L-alanine + ATP = UDP-N-acetyl-alpha-D-muramoyl-L-alanine + ADP + phosphate + H(+). It functions in the pathway cell wall biogenesis; peptidoglycan biosynthesis. Functionally, cell wall formation. This is UDP-N-acetylmuramate--L-alanine ligase from Oceanobacillus iheyensis (strain DSM 14371 / CIP 107618 / JCM 11309 / KCTC 3954 / HTE831).